The chain runs to 490 residues: Ribulose bisphosphate carboxylase large chain (490 aa).

Positions 127 and 177 each coordinate substrate. Lys-179 functions as the Proton acceptor in the catalytic mechanism. Lys-181 is a binding site for substrate. Residues Lys-205, Asp-207, and Glu-208 each contribute to the Mg(2+) site. Lys-205 bears the N6-carboxylysine mark. The active-site Proton acceptor is His-297. Residues Arg-298, His-330, and Ser-382 each contribute to the substrate site.

The protein belongs to the RuBisCO large chain family. Type I subfamily. As to quaternary structure, heterohexadecamer of 8 large chains and 8 small chains. It depends on Mg(2+) as a cofactor.

The protein resides in the plastid. It localises to the chloroplast. It carries out the reaction 2 (2R)-3-phosphoglycerate + 2 H(+) = D-ribulose 1,5-bisphosphate + CO2 + H2O. The catalysed reaction is D-ribulose 1,5-bisphosphate + O2 = 2-phosphoglycolate + (2R)-3-phosphoglycerate + 2 H(+). In terms of biological role, ruBisCO catalyzes two reactions: the carboxylation of D-ribulose 1,5-bisphosphate, the primary event in carbon dioxide fixation, as well as the oxidative fragmentation of the pentose substrate in the photorespiration process. Both reactions occur simultaneously and in competition at the same active site. The chain is Ribulose bisphosphate carboxylase large chain from Thalassiosira nordenskioeldii (Marine diatom).